Reading from the N-terminus, the 676-residue chain is Envelope glycoprotein (676 aa).

An N-terminal signal peptide occupies residues 1-32 (MEGLSLLQLPRDKFRKSSFFVWVIILFQKAFS). The Extracellular segment spans residues 33-650 (MPLGVVTNST…DDNWWTGWRQ (618 aa)). Residue Asn-40 is glycosylated (N-linked (GlcNAc...) asparagine; by host). Intrachain disulfides connect Cys-53-Cys-609, Cys-108-Cys-135, Cys-121-Cys-147, Cys-511-Cys-556, and Cys-601-Cys-608. A receptor-binding region spans residues 54–201 (KDHLASTDQL…TFLQSPPIRE (148 aa)). N-linked (GlcNAc...) asparagine; by host glycosylation is found at Asn-204, Asn-208, Asn-238, Asn-257, Asn-268, Asn-296, and Asn-314. Residues 305–485 (ELSFETLSLN…STSNGLITST (181 aa)) form a mucin-like region region. A disordered region spans residues 312-351 (SLNETEDDDATSSRTTKGRISDRATRKYSDLVPKDSPGMV). Over residues 330-344 (RISDRATRKYSDLVP) the composition is skewed to basic and acidic residues. N-linked (GlcNAc...) asparagine; by host glycosylation occurs at Asn-366. The disordered stretch occupies residues 406-458 (SSSQILSSSPTMAPSPETQTSTTYTPKLPVMTTEEPTTPPRNSPGSTTEAPTL). Composition is skewed to polar residues over residues 415 to 430 (PTMA…TTYT) and 448 to 458 (SPGSTTEAPTL). Asn-463 carries an N-linked (GlcNAc...) asparagine; by host glycan. A fusion peptide region spans residues 524–539 (HNAAGIAWIPYFGPGA). The stretch at 554-595 (LVCGLRQLANETTQALQLFLRATTELRTYTILNRKAIDFLLR) forms a coiled coil. Asn-563 carries N-linked (GlcNAc...) asparagine; by host glycosylation. The stretch at 615–634 (WTKNITDKINQIIHDFIDNP) forms a coiled coil. Asn-618 carries N-linked (GlcNAc...) asparagine; by host glycosylation. The chain crosses the membrane as a helical span at residues 651–671 (WIPAGIGITGIIIAIIALLCV). Residues Cys-670 and Cys-672 are each lipidated (S-palmitoyl cysteine; by host). Residues 672–676 (CKLLC) are Cytoplasmic-facing.

The protein belongs to the filoviruses glycoprotein family. Homotrimer; each monomer consists of a GP1 and a GP2 subunit linked by disulfide bonds. The resulting peplomers (GP1,2) protrude from the virus surface as spikes. Interacts with host integrin alpha-V/ITGAV. Interacts with host CLEC10A. Binds also to host CD209 and CLEC4M/DC-SIGN(R). Interacts with host FOLR1. Interacts with BST2; this interaction inhibits the antiviral effect of BST2 and this allows viral release from infected cells. Interacts with host FCN1; this interaction enhances viral entry. Interacts with host TLR4; this interaction induces cell death in T-lymphocytes or proinflammatory cytokines and SOCS1 production in monocytes. In terms of assembly, interacts with host entry receptor NPC1. As to quaternary structure, GP1 and GP2delta are part of GP1,2delta soluble complexes released by ectodomain shedding. In terms of processing, the signal peptide region modulates GP's high mannose glycosylation, thereby determining the efficiency of the interactions with DC-SIGN(R). N-glycosylated. Post-translationally, O-glycosylated in the mucin-like region. In terms of processing, palmitoylation of GP2 is not required for its function. Specific enzymatic cleavages in vivo yield mature proteins. The precursor is processed into GP1 and GP2 by host cell furin in the trans Golgi, and maybe by other host proteases, to yield the mature GP1 and GP2 proteins. The cleavage site corresponds to the furin optimal cleavage sequence [KR]-X-[KR]-R. This cleavage does not seem to be required for function. After the internalization of the virus into cell endosomes, GP1 C-terminus is removed by the endosomal proteases cathepsin B, cathepsin L, or both, leaving a 19-kDa N-terminal fragment which is further digested by cathepsin B. Proteolytic processing of GP1,2 by host ADAM17 can remove the transmembrane anchor of GP2 and leads to shedding of complexes consisting in GP1 and truncated GP2 (GP1,2delta).

Its subcellular location is the virion membrane. The protein resides in the host cell membrane. The protein localises to the secreted. Functionally, trimeric GP1,2 complexes form the virion surface spikes and mediate the viral entry processes, with GP1 acting as the receptor-binding subunit and GP2 as the membrane fusion subunit. At later times of infection, down-regulates the expression of various host cell surface molecules that are essential for immune surveillance and cell adhesion. Down-modulates several integrins including ITGA1, ITGA2, ITGA3, ITGA4, ITGA5, ITGA6, ITGAV and ITGB1. This decrease in cell adhesion molecules may lead to cell detachment, contributing to the disruption of blood vessel integrity and hemorrhages developed during infection (cytotoxicity). Interacts with host TLR4 and thereby stimulates the differentiation and activation of monocytes leading to bystander death of T-lymphocytes. Down-regulates as well the function of host natural killer cells. Counteracts the antiviral effect of host BST2/tetherin that restricts release of progeny virions from infected cells. However, cooperates with VP40 and host BST2 to activate canonical NF-kappa-B pathway in a manner dependent on neddylation. Its function is as follows. Functions as a decoy for anti-GP1,2 antibodies thereby contributing to viral immune evasion. Interacts and activates host macrophages and dendritic cells inducing up-regulation of cytokine transcription. This effect is mediated throught activation of host TLR4. Responsible for binding to the receptor(s) on target cells. Interacts with CD209/DC-SIGN and CLEC4M/DC-SIGNR which act as cofactors for virus entry into dendritic cells (DCs) and endothelial cells. Binding to the macrophage specific lectin CLEC10A also seems to enhance virus infectivity. Interaction with FOLR1/folate receptor alpha may be a cofactor for virus entry in some cell types, although results are contradictory. Members of the Tyro3 receptor tyrosine kinase family also seem to be cell entry factors in filovirus infection. Once attached, the virions are internalized through clathrin-dependent endocytosis and/or macropinocytosis. After internalization of the virus into the endosomes of the host cell, proteolysis of GP1 by two cysteine proteases, CTSB/cathepsin B and CTSL/cathepsin L removes the glycan cap and allows GP1 binding to the host entry receptor NPC1. NPC1-binding, Ca(2+) and acidic pH induce a conformational change of GP2, which unmasks its fusion peptide and permit membranes fusion. In terms of biological role, acts as a class I viral fusion protein. Under the current model, the protein has at least 3 conformational states: pre-fusion native state, pre-hairpin intermediate state, and post-fusion hairpin state. During viral and target cell membrane fusion, the coiled coil regions (heptad repeats) assume a trimer-of-hairpins structure, positioning the fusion peptide in close proximity to the C-terminal region of the ectodomain. The formation of this structure appears to drive apposition and subsequent fusion of viral and target cell membranes. Responsible for penetration of the virus into the cell cytoplasm by mediating the fusion of the membrane of the endocytosed virus particle with the endosomal membrane. Low pH in endosomes induces an irreversible conformational change in GP2, releasing the fusion hydrophobic peptide. The chain is Envelope glycoprotein (GP) from Sudan ebolavirus (strain Maleo-79) (SEBOV).